We begin with the raw amino-acid sequence, 209 residues long: MKLRGLYAITDSRLLADGRLLPYVEAALRGGARLLQYRDKSDEDARRLREAEALRDLCLRYGAQLIVNDDLELAARLGVGLHLGQQDGSLSAARALLGPKAIIGATCHGQLELAEQAAADGASYLAFGRFFDSSTKPGAPPASLELLERARARFPQPLVAIGGVTLDNAPELIRRGAAMIAVINALFAAANAAEVEQRARAFGQLFADT.

Residues 36-40 (QYRDK) and asparagine 68 each bind 4-amino-2-methyl-5-(diphosphooxymethyl)pyrimidine. Aspartate 69 and aspartate 87 together coordinate Mg(2+). Threonine 106 serves as a coordination point for 4-amino-2-methyl-5-(diphosphooxymethyl)pyrimidine. 133-135 (SST) contributes to the 2-[(2R,5Z)-2-carboxy-4-methylthiazol-5(2H)-ylidene]ethyl phosphate binding site. Position 136 (lysine 136) interacts with 4-amino-2-methyl-5-(diphosphooxymethyl)pyrimidine. Position 163 (glycine 163) interacts with 2-[(2R,5Z)-2-carboxy-4-methylthiazol-5(2H)-ylidene]ethyl phosphate.

The protein belongs to the thiamine-phosphate synthase family. It depends on Mg(2+) as a cofactor.

It catalyses the reaction 2-[(2R,5Z)-2-carboxy-4-methylthiazol-5(2H)-ylidene]ethyl phosphate + 4-amino-2-methyl-5-(diphosphooxymethyl)pyrimidine + 2 H(+) = thiamine phosphate + CO2 + diphosphate. It carries out the reaction 2-(2-carboxy-4-methylthiazol-5-yl)ethyl phosphate + 4-amino-2-methyl-5-(diphosphooxymethyl)pyrimidine + 2 H(+) = thiamine phosphate + CO2 + diphosphate. The enzyme catalyses 4-methyl-5-(2-phosphooxyethyl)-thiazole + 4-amino-2-methyl-5-(diphosphooxymethyl)pyrimidine + H(+) = thiamine phosphate + diphosphate. Its pathway is cofactor biosynthesis; thiamine diphosphate biosynthesis; thiamine phosphate from 4-amino-2-methyl-5-diphosphomethylpyrimidine and 4-methyl-5-(2-phosphoethyl)-thiazole: step 1/1. Its function is as follows. Condenses 4-methyl-5-(beta-hydroxyethyl)thiazole monophosphate (THZ-P) and 2-methyl-4-amino-5-hydroxymethyl pyrimidine pyrophosphate (HMP-PP) to form thiamine monophosphate (TMP). The sequence is that of Thiamine-phosphate synthase from Azotobacter vinelandii (strain DJ / ATCC BAA-1303).